The primary structure comprises 397 residues: Odorant receptor 59a (397 aa).

Residues 1–36 lie on the Cytoplasmic side of the membrane; that stretch reads MAEVRVDSLEFFKSHWTAWRYLGVAHFRVENWKNLY. The chain crosses the membrane as a helical span at residues 37-57; sequence VFYSIVSNLLVTLCYPVHLGI. Residues 58–68 are Extracellular-facing; the sequence is SLFRNRTITED. The N-linked (GlcNAc...) asparagine glycan is linked to Asn62. A helical transmembrane segment spans residues 69-92; sequence ILNLTTFATCTACSVKCLLYAYNI. At 93–128 the chain is on the cytoplasmic side; sequence KDVLEMERLLRLLDERVVGPEQRSIYGQVRVQLRNV. A helical membrane pass occupies residues 129–149; the sequence is LYVFIGIYMPCALFAELSFLF. Residues 150–179 are Extracellular-facing; the sequence is KEERGLMYPAWFPFDWLHSTRNYYIANAYQ. Residues 180-200 form a helical membrane-spanning segment; that stretch reads IVGISFQLLQNYVSDCFPAVV. Over 201 to 274 the chain is Cytoplasmic; sequence LCLISSHIKM…IEAFISLPML (74 aa). Residues 275-295 form a helical membrane-spanning segment; the sequence is IQFTVTALNVCIGLAALVFFV. At 296–301 the chain is on the extracellular side; it reads SEPMAR. A helical transmembrane segment spans residues 302-322; the sequence is MYFIFYSLAMPLQIFPSCFFG. Residues 323-372 are Cytoplasmic-facing; the sequence is TDNEYWFGRLHYAAFSCNWHTQNRSFKRKMMLFVEQSLKKSTAVAGGMMR. Residues 373–393 traverse the membrane as a helical segment; sequence IHLDTFFSTLKGAYSLFTIII. Residues 394-397 are Extracellular-facing; it reads RMRK.

This sequence belongs to the insect chemoreceptor superfamily. Heteromeric odorant receptor channel (TC 1.A.69) family. Or2a subfamily. As to quaternary structure, interacts with Orco. Complexes exist early in the endomembrane system in olfactory sensory neurons (OSNs), coupling these complexes to the conserved ciliary trafficking pathway. In terms of tissue distribution, expressed in neurons of the third antennal segment.

It localises to the cell membrane. Functionally, odorant receptor which mediates acceptance or avoidance behavior, depending on its substrates. The odorant receptor repertoire encodes a large collection of odor stimuli that vary widely in identity, intensity, and duration. May form a complex with Orco to form odorant-sensing units, providing sensitive and prolonged odorant signaling and calcium permeability. Involved in the behavioral responses to ethyl acetate, anisole, hexanoic acid, and pyrazines. This is Odorant receptor 59a (Or59a) from Drosophila melanogaster (Fruit fly).